Consider the following 184-residue polypeptide: UPF0149 protein PA14_69010 (184 aa).

The protein belongs to the UPF0149 family.

This chain is UPF0149 protein PA14_69010, found in Pseudomonas aeruginosa (strain UCBPP-PA14).